Here is a 168-residue protein sequence, read N- to C-terminus: Lipoprotein signal peptidase (168 aa).

4 helical membrane passes run 15–35 (WLWLAILVFIADIGIKLVVMD), 47–67 (VLPFFNLLYVHNYGAAFSFLS), 75–95 (WLFTGIAFVVTGLLTYWMSKL), and 107–127 (ALIIGGAVGNVFDRVVHGFVV). Active-site residues include Asp128 and Asp146. The chain crosses the membrane as a helical span at residues 141–161 (AFNLADTTICIGAAMIILDGF).

It belongs to the peptidase A8 family.

Its subcellular location is the cell inner membrane. The catalysed reaction is Release of signal peptides from bacterial membrane prolipoproteins. Hydrolyzes -Xaa-Yaa-Zaa-|-(S,diacylglyceryl)Cys-, in which Xaa is hydrophobic (preferably Leu), and Yaa (Ala or Ser) and Zaa (Gly or Ala) have small, neutral side chains.. Its pathway is protein modification; lipoprotein biosynthesis (signal peptide cleavage). In terms of biological role, this protein specifically catalyzes the removal of signal peptides from prolipoproteins. The sequence is that of Lipoprotein signal peptidase from Vibrio campbellii (strain ATCC BAA-1116).